The chain runs to 344 residues: UDP-3-O-acylglucosamine N-acyltransferase (344 aa).

The active-site Proton acceptor is H250.

Belongs to the transferase hexapeptide repeat family. LpxD subfamily. Homotrimer.

It catalyses the reaction a UDP-3-O-[(3R)-3-hydroxyacyl]-alpha-D-glucosamine + a (3R)-hydroxyacyl-[ACP] = a UDP-2-N,3-O-bis[(3R)-3-hydroxyacyl]-alpha-D-glucosamine + holo-[ACP] + H(+). It functions in the pathway bacterial outer membrane biogenesis; LPS lipid A biosynthesis. Catalyzes the N-acylation of UDP-3-O-acylglucosamine using 3-hydroxyacyl-ACP as the acyl donor. Is involved in the biosynthesis of lipid A, a phosphorylated glycolipid that anchors the lipopolysaccharide to the outer membrane of the cell. In Maricaulis maris (strain MCS10) (Caulobacter maris), this protein is UDP-3-O-acylglucosamine N-acyltransferase.